The primary structure comprises 380 residues: Glutamyl-tRNA reductase 1 (380 aa).

Residues 42-45 (TCNR), Ser-93, 98-100 (ETD), and Gln-104 each bind substrate. Catalysis depends on Cys-43, which acts as the Nucleophile. 172 to 177 (GAGAVG) serves as a coordination point for NADP(+).

This sequence belongs to the glutamyl-tRNA reductase family. As to quaternary structure, homodimer.

It catalyses the reaction (S)-4-amino-5-oxopentanoate + tRNA(Glu) + NADP(+) = L-glutamyl-tRNA(Glu) + NADPH + H(+). Its pathway is porphyrin-containing compound metabolism; protoporphyrin-IX biosynthesis; 5-aminolevulinate from L-glutamyl-tRNA(Glu): step 1/2. Functionally, catalyzes the NADPH-dependent reduction of glutamyl-tRNA(Glu) to glutamate 1-semialdehyde (GSA). This chain is Glutamyl-tRNA reductase 1, found in Pyrobaculum calidifontis (strain DSM 21063 / JCM 11548 / VA1).